The sequence spans 133 residues: Large-conductance mechanosensitive channel (133 aa).

2 helical membrane-spanning segments follow: residues 14–34 (VVDL…VSSL) and 67–87 (GNFI…FMFV).

Belongs to the MscL family. In terms of assembly, homopentamer.

The protein localises to the cell membrane. In terms of biological role, channel that opens in response to stretch forces in the membrane lipid bilayer. May participate in the regulation of osmotic pressure changes within the cell. The protein is Large-conductance mechanosensitive channel of Bacillus cereus (strain AH187).